A 115-amino-acid polypeptide reads, in one-letter code: MEHVKYILKQSWSRHSSSKWTEECPSCGQCGVTALVIQDHFGGTIFKTRVDESWHFYNSINGVVYDFTSEQFQAPIEYQHIPSSREEAFLDTNEEQYQHLREAFSRHMNSISEET.

This is an uncharacterized protein from Bacillus subtilis (strain 168).